Consider the following 132-residue polypeptide: Large ribosomal subunit protein bL17 (132 aa).

The protein belongs to the bacterial ribosomal protein bL17 family. As to quaternary structure, part of the 50S ribosomal subunit. Contacts protein L32.

This chain is Large ribosomal subunit protein bL17, found in Ralstonia pickettii (strain 12J).